A 538-amino-acid chain; its full sequence is Putative cysteine ligase BshC (538 aa).

The stretch at Ile248 to Leu268 forms a coiled coil.

Belongs to the BshC family.

Functionally, involved in bacillithiol (BSH) biosynthesis. May catalyze the last step of the pathway, the addition of cysteine to glucosamine malate (GlcN-Mal) to generate BSH. In Bacillus cereus (strain ATCC 14579 / DSM 31 / CCUG 7414 / JCM 2152 / NBRC 15305 / NCIMB 9373 / NCTC 2599 / NRRL B-3711), this protein is Putative cysteine ligase BshC.